The following is a 333-amino-acid chain: 6-phosphogluconolactonase (333 aa).

It belongs to the cycloisomerase 2 family.

It carries out the reaction 6-phospho-D-glucono-1,5-lactone + H2O = 6-phospho-D-gluconate + H(+). It participates in carbohydrate degradation; pentose phosphate pathway; D-ribulose 5-phosphate from D-glucose 6-phosphate (oxidative stage): step 2/3. In terms of biological role, catalyzes the hydrolysis of 6-phosphogluconolactone to 6-phosphogluconate. This chain is 6-phosphogluconolactonase, found in Buchnera aphidicola subsp. Schizaphis graminum (strain Sg).